We begin with the raw amino-acid sequence, 218 residues long: Histone H1.1 (218 aa).

Positions M1–S42 are disordered. The residue at position 2 (S2) is an N-acetylserine. Phosphoserine occurs at positions 2 and 12. Position 17 is an N6-acetyllysine (K17). Positions A20–P38 are enriched in basic residues. The residue at position 37 (K37) is an N6-(beta-hydroxybutyryl)lysine. The H15 domain maps to A39 to K112. S44 is subject to Phosphoserine. The residue at position 55 (K55) is an N6-(beta-hydroxybutyryl)lysine. Citrulline is present on R57. The residue at position 67 (K67) is an N6-(beta-hydroxybutyryl)lysine. K78 is modified (N6-acetyllysine). K88 is modified (N6-(beta-hydroxybutyryl)lysine). Residue K93 is modified to N6-(beta-hydroxybutyryl)lysine; alternate. The residue at position 93 (K93) is an N6-acetyllysine; alternate. At S107 the chain carries Phosphoserine; by PKC. K109 is modified (N6-(beta-hydroxybutyryl)lysine). The disordered stretch occupies residues S116–K218. The segment covering A119–K149 has biased composition (low complexity). K125 carries the N6-acetyllysine modification. 2 stretches are compositionally biased toward basic residues: residues K150–A183 and K190–K218. At T206 the chain carries Phosphothreonine.

This sequence belongs to the histone H1/H5 family. In terms of assembly, interacts with DFFB. H1 histones are progressively phosphorylated during the cell cycle, becoming maximally phosphorylated during late G2 phase and M phase, and being dephosphorylated sharply thereafter. In terms of processing, citrullination at Arg-57 (H1R54ci) by PADI4 takes place within the DNA-binding site of H1 and results in its displacement from chromatin and global chromatin decondensation, thereby promoting pluripotency and stem cell maintenance.

The protein resides in the nucleus. Its subcellular location is the chromosome. Its function is as follows. H1 histones bind to linker DNA between nucleosomes forming the macromolecular structure known as the chromatin fiber. H1 histones are necessary for the condensation of nucleosome chains into higher-order structured fibers. Also acts as a regulator of individual gene transcription through chromatin remodeling. The protein is Histone H1.1 of Bos taurus (Bovine).